The chain runs to 71 residues: Alpha-cobratoxin (71 aa).

Cystine bridges form between Cys-3-Cys-20, Cys-14-Cys-41, Cys-26-Cys-30, Cys-45-Cys-56, and Cys-57-Cys-62.

This sequence belongs to the three-finger toxin family. Long-chain subfamily. Type II alpha-neurotoxin sub-subfamily. Monomer, homo- or heterodimer with cytotoxins 1 (P60305), 2 (AC P01445), and 3 (AC P01446); disulfide-linked. In terms of processing, in homodimer alpha-cobratoxin, selective reduction of Cys(26)-Cys(30) in one subunit does not affect the activity against the alpha-7/CHRNA7 nAChR, whereas its reduction in both subunits almost prevents alpha-7/CHRNA7 nAChR recognition. On the contrary, reduction of one or both Cys(26)-Cys(30) disulfide bonds in the homodimer considerably potentiates inhibition of the alpha-3-beta-2/CHRNA3-CHRNB2 nAChR by the toxin. Expressed by the venom gland.

It is found in the secreted. Monomer: binds with high affinity to muscular (alpha-1-beta-1-gamma-delta/CHRNA1-CHRNB1-CHRNG-CHRND) nAChR (tested on Torpedo californica, Kd=0.2-4.5 nM) and neuronal alpha-7/CHRNA7 nicotinic acetylcholine receptors (Kd=13-105 nM). Also inhibits GABA(A) channels. Heteropentamer targets studied are composed of alpha-1-beta-3-gamma-2 (GABRA1-GABRB3-GABRG2) subunits (IC(50)=236 nM), alpha-1-beta-2-gamma-2 (GABRA1-GABRB2-GABRG2) subunits (IC(50)=469 nM), alpha-2-beta-2-gamma-2 (GABRA2-GABRB2-GABRG2) subunits (IC(50)=485 nM), alpha-5-beta-3-gamma-2 (GABRA5-GABRB3-GABRG2) subunits (IC(50)=635 nM), and alpha-2-beta-3-gamma-2 (GABRA2-GABRB3-GABRG2) subunits (IC(50)=1099 nM) (activated by 10 uM GABA). Its function is as follows. Homodimer: binds with high affinity (but lower than the monomeric form) to muscular (IC(50)=9.7 nM) and with low affinity to neuronal alpha-7/CHRNA7 nAChRs (IC(50)=1370 nM). However, it acquires (compared to the monomeric form) the capacity to block alpha-3/beta-2 (CHRNA3/CHRNB2) nAChRs. In terms of biological role, heterodimer with cytotoxin 3 (AC P01446): is slightly more active than the homodimer in inhibiting alpha-7/CHRNA7 nAChR and is considerably more active in blocking the alpha-3-beta-2/CHRNA3-CHRNB2 nAChR. The chain is Alpha-cobratoxin from Naja kaouthia (Monocled cobra).